The primary structure comprises 423 residues: Histidine--tRNA ligase (423 aa).

It belongs to the class-II aminoacyl-tRNA synthetase family.

It localises to the cytoplasm. The enzyme catalyses tRNA(His) + L-histidine + ATP = L-histidyl-tRNA(His) + AMP + diphosphate + H(+). In Picrophilus torridus (strain ATCC 700027 / DSM 9790 / JCM 10055 / NBRC 100828 / KAW 2/3), this protein is Histidine--tRNA ligase.